Here is a 1182-residue protein sequence, read N- to C-terminus: MEESQSKQESSTKVAQHEGQEDVDPTFKTKKLMEVELMKHRVQLERNLKLRTFPGARTKQVKEALYPLLTWSSKSKNLFQNFTKLLLFKKLCQRGSENLVRESWYPCVPEEEAHMIDIQDLFGPNLGTQKKPQLVIIEGAAGIGKSTLARLVKRAWKEGKLYRNDFHHVFFFSCRELAQYEQLSLAELIVQGQEVPTAPIRQILSHPEKLLFILDGIDEPAWVLADQNPELCLHWSQTQPVHTLLGSLLGKSILPGASFLLTTRTTALQKFIPSLEQPCQVEVLGFTLFERKNYFYKYFGKKKGGVTTFTLVKSNSALLTLCEVPWVCWLVCTCLKKQMEQGGELSLTSQTTTALCLKYLSLTIPGQHMRTQLRDLCSLAAEGVCQRRTLFSESDLCKQGLDEHAIASFLKIGVLQKQASSLSYSFAHLCLQEFFAAMSYILDDSEERHADMKNDRIVETLVERYGRQNLFEAPTVRFLFGLLSKEELKKIEKLFSCSLHGKTKLKLLWHILGKSQPHQPPCLGLLHCLYENQDMELLTHVMHDLQGTIVPGPDDLAHTVLQTNVKHLVIQTDMDLMVVTFCIKFCCHVRSLQLNRKVQQGHKFTAPGMVLYRWTPITDASWKIFFSNLKLARNLEELDLSGNPLSYYAVHSLCTTLRKRGCQLKTLWLVECGLTSTYCSLLASVLSARSSLTELDLQLNDLGDGGVKMLCEGLRNPACNLSILWLDQASLSDQVIAELRTLEAKNPKLLISSTWKPHVMVPTMNMDKEEVGDSQALLKQQRQQSGDKHMEPLGTEDEFWGPTGPVTTEVVDRERNLYRVQLPMAGSYHCPSTGLHFVVTRAVTIEIEFCAWSQYLDKTPLQQSHMVVGPLFDIKAEQGAVTAVYLPHFVALQEGIVDSSLFHVAHFQEHGMVLETPARVEQHYAVLENPSFSPMGILLRMIPAVGHFIPITSTTLIYYHLYLEDVTFHLYLVPNDCSIRKAIDDEEMKFQFVRINKPPPVDALYLGSRYIVSSSKLVEIIPKELELCYRSPGESQLFSEIDIGHMDSEIKLQIKDKRHMNLKWEALLKPGDLRPALPKIATAPKDAPSLLHFMDQHREQLVARVTSVDPLLDKLHGLVLSEDSYEVVRSETTNQDKMRKLFSLSRSWSWDCKDQFYQALKETHPHLVMDILEKLGGVSVKS.

Residues 1-23 (MEESQSKQESSTKVAQHEGQEDV) form a disordered region. Positions 133–442 (QLVIIEGAAG…EFFAAMSYIL (310 aa)) constitute an NACHT domain. 139 to 146 (GAAGIGKS) serves as a coordination point for ATP. LRR repeat units follow at residues 634–655 (NLEE…SLCT), 691–711 (SLTE…KMLC), and 720–743 (NLSI…RTLE). The tract at residues 780 to 806 (QQRQQSGDKHMEPLGTEDEFWGPTGPV) is disordered. The tract at residues 799 to 932 (FWGPTGPVTT…HYAVLENPSF (134 aa)) is ZU5. Residues 799-1082 (FWGPTGPVTT…LRPALPKIAT (284 aa)) form the FIIND domain. Residues 933–1082 (SPMGILLRMI…LRPALPKIAT (150 aa)) are UPA. A CARD domain is found at 1092–1175 (HFMDQHREQL…HLVMDILEKL (84 aa)).

Belongs to the NLRP family. As to quaternary structure, interacts (via LRR repeats) with BCL2 and BCL2L1 (via the loop between motifs BH4 and BH3). Interacts with NOD2; this interaction is enhanced in the presence of muramyl dipeptide (MDP) and increases IL1B release. Interacts with EIF2AK2/PKR; this interaction requires EIF2AK2 activity, is accompanied by EIF2AK2 autophosphorylation and promotes inflammasome assembly in response to danger-associated signals. Interacts with MEFV; this interaction targets Nlrp1a to degradation by autophagy, hence preventing excessive IL1B- and IL18-mediated inflammation. Interacts with DPP9; leading to inhibit activation of the inflammasome. DPP9 acts via formation of a ternary complex, composed of a DPP9 homodimer, one full-length Nlrp1a protein, and one cleaved C-terminus of Nlrp1a (NACHT, LRR and PYD domains-containing protein 1a, C-terminus). Interacts with DPP8; leading to inhibit activation of the inflammasome, probably via formation of a ternary complex with DPP8. In terms of assembly, interacts with the C-terminal part of Nlrp1a (NACHT, LRR and PYD domains-containing protein 1a, C-terminus) in absence of pathogens and other damage-associated signals. Interacts with the N-terminal part of Nlrp1a (NACHT, LRR and PYD domains-containing protein 1a, N-terminus) in absence of pathogens and other damage-associated signals. Homomultimer; forms the Nlrp1a inflammasome polymeric complex, a filament composed of homopolymers of this form in response to pathogens and other damage-associated signals. Interacts (via CARD domain) with CASP1 (via CARD domain); leading to CASP1 activation. Post-translationally, autocatalytically cleaved. Autocatalytic cleavage in FIIND region occurs constitutively, prior to activation signals, and is required for inflammasome activity (IL1B release), possibly by facilitating CASP1 binding. Both N- and C-terminal parts remain associated non-covalently. In terms of processing, ubiquitinated in response to pathogen-associated signals, leading to its degradation by the proteasome and subsequent release of the cleaved C-terminal part of the protein (NACHT, LRR and PYD domains-containing protein 1a, C-terminus), which polymerizes and forms the Nlrp1a inflammasome. Highly expressed in hematopoietic stem cells and progenitor cells of both myeloid and lymphoid origin. The expression is highly strain-dependent. Not expressed in Balb/cJ animals, but widely expressed in C57BL/6J. Expressed in macrophages resistant to Bacillus anthracis lethal toxin, but not in toxin-sensitive macrophages, except in CAST/EiJ strain.

Its subcellular location is the cytoplasm. It localises to the cytosol. The protein resides in the nucleus. The protein localises to the inflammasome. With respect to regulation, nlrp1a inflammasome is activated by pathogens and other damage-associated signals: activation promotes ubiquitination and degradation of the N-terminal part, releasing the cleaved C-terminal part of the protein (NACHT, LRR and PYD domains-containing protein 1a, C-terminus), which polymerizes and forms the Nlrp1a inflammasome. Nlrp1a inflammasome is inhibited by DPP8 and DPP9, which sequester the C-terminal fragment of Nlrp1a (NACHT, LRR and PYD domains-containing protein 1a, C-terminus) in a ternary complex, thereby preventing Nlrp1a oligomerization and activation. Nlrp1a inflammasome is activated by Val-boroPro (Talabostat, PT-100), an inhibitor of dipeptidyl peptidases DPP8 and DPP9. Val-boroPro relieves inhibition of DPP8 and/or DPP9 by promoting disruption of the ternary complex, releasing its C-terminal part from autoinhibition. Functionally, acts as the sensor component of the Nlrp1a inflammasome, which mediates inflammasome activation in response to various pathogen-associated signals, leading to subsequent pyroptosis. Inflammasomes are supramolecular complexes that assemble in the cytosol in response to pathogens and other damage-associated signals and play critical roles in innate immunity and inflammation. Acts as a recognition receptor (PRR): recognizes specific pathogens and other damage-associated signals, and mediates the formation of the inflammasome polymeric complex. In response to pathogen-associated signals, the N-terminal part of Nlrp1a is degraded by the proteasome, releasing the cleaved C-terminal part of the protein (NACHT, LRR and PYD domains-containing protein 1a, C-terminus), which polymerizes to initiate the formation of the inflammasome complex: the inflammasome recruits pro-caspase-1 (proCASP1) and promotes caspase-1 (CASP1) activation, which subsequently cleaves and activates inflammatory cytokines IL1B and IL18 and gasdermin-D (GSDMD), leading to pyroptosis. In the absence of GSDMD expression, the Nlrp1a inflammasome is able to recruit and activate CASP8, leading to activation of gasdermin-E (GSDME). Activation of Nlrp1a inflammasome is also required for HMGB1 secretion; the active cytokines and HMGB1 stimulate inflammatory responses. When activated in the bone marrow, induces the pyroptosis of hematopoietic stem cells and progenitor cells of both myeloid and lymphoid lineages, hence allowing the removal of damaged cells, and the release of IL1B, which induces granulopoiesis. In terms of biological role, constitutes the precursor of the Nlrp1a inflammasome, which mediates autoproteolytic processing within the FIIND domain to generate the N-terminal and C-terminal parts, which are associated non-covalently in absence of pathogens and other damage-associated signals. Regulatory part that prevents formation of the Nlrp1a inflammasome: in absence of pathogens and other damage-associated signals, interacts with the C-terminal part of Nlrp1a (NACHT, LRR and PYD domains-containing protein 1a, C-terminus), preventing activation of the Nlrp1a inflammasome. In response to pathogen-associated signals, this part is ubiquitinated and degraded by the proteasome, releasing the cleaved C-terminal part of the protein, which polymerizes and forms the Nlrp1a inflammasome. Its function is as follows. Constitutes the active part of the Nlrp1a inflammasome. In absence of pathogens and other damage-associated signals, interacts with the N-terminal part of Nlrp1a (NACHT, LRR and PYD domains-containing protein 1a, N-terminus), preventing activation of the Nlrp1a inflammasome. In response to pathogen-associated signals, the N-terminal part of Nlrp1a is degraded by the proteasome, releasing this form, which polymerizes to form the Nlrp1a inflammasome complex: the Nlrp1a inflammasome complex then directly recruits pro-caspase-1 (proCASP1) and promotes caspase-1 (CASP1) activation, leading to gasdermin-D (GSDMD) cleavage and subsequent pyroptosis. This is NACHT, LRR and PYD domains-containing protein 1a from Mus musculus (Mouse).